A 400-amino-acid chain; its full sequence is Acetate kinase (400 aa).

Residue N9 participates in Mg(2+) binding. K16 contributes to the ATP binding site. R90 lines the substrate pocket. D147 (proton donor/acceptor) is an active-site residue. Residues 207-211 (HIGNG), 282-284 (DLR), and 330-334 (GIGEN) each bind ATP. Mg(2+) is bound at residue E385.

Belongs to the acetokinase family. As to quaternary structure, homodimer. The cofactor is Mg(2+). It depends on Mn(2+) as a cofactor.

It is found in the cytoplasm. The enzyme catalyses acetate + ATP = acetyl phosphate + ADP. Its pathway is metabolic intermediate biosynthesis; acetyl-CoA biosynthesis; acetyl-CoA from acetate: step 1/2. Functionally, catalyzes the formation of acetyl phosphate from acetate and ATP. Can also catalyze the reverse reaction. The protein is Acetate kinase of Staphylococcus aureus (strain USA300).